Consider the following 305-residue polypeptide: Sulfate adenylyltransferase subunit 2 1 (305 aa).

Positions 283–305 (RSGRAIDHDQAGSMERKKREGYF) are disordered.

Belongs to the PAPS reductase family. CysD subfamily. Heterodimer composed of CysD, the smaller subunit, and CysN.

The enzyme catalyses sulfate + ATP + H(+) = adenosine 5'-phosphosulfate + diphosphate. It participates in sulfur metabolism; hydrogen sulfide biosynthesis; sulfite from sulfate: step 1/3. Functionally, with CysN forms the ATP sulfurylase (ATPS) that catalyzes the adenylation of sulfate producing adenosine 5'-phosphosulfate (APS) and diphosphate, the first enzymatic step in sulfur assimilation pathway. APS synthesis involves the formation of a high-energy phosphoric-sulfuric acid anhydride bond driven by GTP hydrolysis by CysN coupled to ATP hydrolysis by CysD. This is Sulfate adenylyltransferase subunit 2 1 from Chromohalobacter salexigens (strain ATCC BAA-138 / DSM 3043 / CIP 106854 / NCIMB 13768 / 1H11).